Here is a 400-residue protein sequence, read N- to C-terminus: Chalcone synthase WHP1 (400 aa).

The active site involves Cys-167.

It belongs to the thiolase-like superfamily. Chalcone/stilbene synthases family.

It catalyses the reaction (E)-4-coumaroyl-CoA + 3 malonyl-CoA + 3 H(+) = 2',4,4',6'-tetrahydroxychalcone + 3 CO2 + 4 CoA. The protein operates within secondary metabolite biosynthesis; flavonoid biosynthesis. Functionally, the primary product of this enzyme is 4,2',4',6'-tetrahydroxychalcone (also termed naringenin-chalcone or chalcone) which can under specific conditions spontaneously isomerize into naringenin. This chain is Chalcone synthase WHP1 (WHP1), found in Zea mays (Maize).